A 469-amino-acid chain; its full sequence is 6-phosphofructo-2-kinase/fructose-2,6-bisphosphatase 4 (469 aa).

The segment at 1-249 (MASPRELTQN…YYLMNIHVTP (249 aa)) is 6-phosphofructo-2-kinase. 46 to 54 (GLPARGKTY) lines the ATP pocket. Beta-D-fructose 6-phosphate contacts are provided by Arg79 and Arg103. Asp129 is an active-site residue. Thr131 and Arg137 together coordinate beta-D-fructose 6-phosphate. Cys159 is a catalytic residue. 168-173 (NIVQVK) provides a ligand contact to ATP. Beta-D-fructose 6-phosphate is bound by residues Lys173, Arg194, and Tyr198. The tract at residues 250 to 469 (RSIYLCRHGE…EALVTVPAHQ (220 aa)) is fructose-2,6-bisphosphatase. Arg256 is a binding site for beta-D-fructose 2,6-bisphosphate. The Tele-phosphohistidine intermediate role is filled by His257. Residues Asn263, Gly269, and Arg306 each coordinate beta-D-fructose 2,6-bisphosphate. Glu326 (proton donor/acceptor) is an active-site residue. Residues Tyr337, Arg351, Lys355, Tyr366, Gln392, and Arg396 each coordinate beta-D-fructose 2,6-bisphosphate. 348 to 351 (FALR) lines the ATP pocket. ATP-binding positions include 392–396 (QAVMR) and Tyr428. Thr444 bears the Phosphothreonine; by PKC mark.

This sequence in the C-terminal section; belongs to the phosphoglycerate mutase family. In terms of assembly, homodimer.

It carries out the reaction beta-D-fructose 2,6-bisphosphate + H2O = beta-D-fructose 6-phosphate + phosphate. The catalysed reaction is beta-D-fructose 6-phosphate + ATP = beta-D-fructose 2,6-bisphosphate + ADP + H(+). Its activity is regulated as follows. The most important regulatory mechanism of these opposing activities is by phosphorylation and dephosphorylation of the enzyme. Synthesis and degradation of fructose 2,6-bisphosphate. The protein is 6-phosphofructo-2-kinase/fructose-2,6-bisphosphatase 4 (PFKFB4) of Macaca fascicularis (Crab-eating macaque).